The following is a 608-amino-acid chain: Chaperone protein HtpG (608 aa).

Residues 1 to 332 (MQFQTEVNQL…VEDLPLNVSR (332 aa)) are a; substrate-binding. The tract at residues 333–536 (EILQENQILK…KNKPDFAMQQ (204 aa)) is b. A c region spans residues 537-608 (LLKQMGQEQN…LTKIINKAFS (72 aa)).

Belongs to the heat shock protein 90 family. In terms of assembly, homodimer.

It is found in the cytoplasm. Its function is as follows. Molecular chaperone. Has ATPase activity. The polypeptide is Chaperone protein HtpG (Campylobacter jejuni (strain RM1221)).